We begin with the raw amino-acid sequence, 213 residues long: Receptor-binding cancer antigen expressed on SiSo cells (213 aa).

Residues 1-6 (MAITQF) are Extracellular-facing. Residues 7-27 (RLFKVCTCLATVLSFLKRLIC) form a helical; Signal-anchor for type III membrane protein membrane-spanning segment. Topologically, residues 28–213 (RSGRGRKLSG…EQNKMGVKLS (186 aa)) are cytoplasmic. At S36 the chain carries Phosphoserine. Position 41 is a phosphothreonine (T41). Y94 is subject to Phosphotyrosine. Residues 168-209 (QAEEVLRQQKIADREKRAAEQQRKKMEKEAQRLLKKEQNKMG) adopt a coiled-coil conformation. Residues 179–206 (ADREKRAAEQQRKKMEKEAQRLLKKEQN) are compositionally biased toward basic and acidic residues. The segment at 179 to 213 (ADREKRAAEQQRKKMEKEAQRLLKKEQNKMGVKLS) is disordered.

In terms of assembly, homodimer.

The protein localises to the golgi apparatus membrane. May participate in suppression of cell proliferation and induces apoptotic cell death through activation of interleukin-1-beta converting enzyme (ICE)-like proteases. This Rattus norvegicus (Rat) protein is Receptor-binding cancer antigen expressed on SiSo cells (Ebag9).